A 369-amino-acid chain; its full sequence is 4-hydroxy-3-methylbut-2-en-1-yl diphosphate synthase (flavodoxin) (369 aa).

[4Fe-4S] cluster contacts are provided by C270, C273, C305, and E312.

The protein belongs to the IspG family. The cofactor is [4Fe-4S] cluster.

It carries out the reaction (2E)-4-hydroxy-3-methylbut-2-enyl diphosphate + oxidized [flavodoxin] + H2O + 2 H(+) = 2-C-methyl-D-erythritol 2,4-cyclic diphosphate + reduced [flavodoxin]. It participates in isoprenoid biosynthesis; isopentenyl diphosphate biosynthesis via DXP pathway; isopentenyl diphosphate from 1-deoxy-D-xylulose 5-phosphate: step 5/6. In terms of biological role, converts 2C-methyl-D-erythritol 2,4-cyclodiphosphate (ME-2,4cPP) into 1-hydroxy-2-methyl-2-(E)-butenyl 4-diphosphate. The polypeptide is 4-hydroxy-3-methylbut-2-en-1-yl diphosphate synthase (flavodoxin) (Pseudomonas putida (strain ATCC 700007 / DSM 6899 / JCM 31910 / BCRC 17059 / LMG 24140 / F1)).